We begin with the raw amino-acid sequence, 239 residues long: Protein Thf1 (239 aa).

Residues 183 to 221 are a coiled coil; the sequence is ERVRKDLELYRSSLDRMKQARAVVEEMVKAARRQQERRQ. Basic and acidic residues predominate over residues 211-221; sequence KAARRQQERRQ. Residues 211 to 239 are disordered; sequence KAARRQQERRQSAASLPETSLGDPSKPGS.

The protein belongs to the THF1 family.

Functionally, may be involved in photosynthetic membrane biogenesis. The chain is Protein Thf1 from Synechococcus sp. (strain JA-2-3B'a(2-13)) (Cyanobacteria bacterium Yellowstone B-Prime).